A 212-amino-acid polypeptide reads, in one-letter code: Interleukin-6 (212 aa).

The first 29 residues, 1 to 29, serve as a signal peptide directing secretion; it reads MNSFSTSAFGPVAFSLGLLLVLPAAFPAP. 2 cysteine pairs are disulfide-bonded: cysteine 72/cysteine 78 and cysteine 101/cysteine 111. Asparagine 73 carries an N-linked (GlcNAc...) asparagine glycan. A glycan (N-linked (GlcNAc...) asparagine) is linked at asparagine 172.

The protein belongs to the IL-6 superfamily. Component of a hexamer of two molecules each of IL6, IL6R and IL6ST; first binds to IL6R to associate with the signaling subunit IL6ST. Interacts with IL6R (via the N-terminal ectodomain); this interaction may be affected by IL6R-binding with SORL1, hence decreasing IL6 cis signaling. Interacts with SORL1 (via the N-terminal ectodomain); this interaction leads to IL6 internalization and lysosomal degradation. May form a trimeric complex with the soluble SORL1 ectodomain and soluble IL6R receptor; this interaction might stabilize circulating IL6, hence promoting IL6 trans signaling.

It is found in the secreted. Cytokine with a wide variety of biological functions in immunity, tissue regeneration, and metabolism. Binds to IL6R, then the complex associates to the signaling subunit IL6ST/gp130 to trigger the intracellular IL6-signaling pathway. The interaction with the membrane-bound IL6R and IL6ST stimulates 'classic signaling', whereas the binding of IL6 and soluble IL6R to IL6ST stimulates 'trans-signaling'. Alternatively, 'cluster signaling' occurs when membrane-bound IL6:IL6R complexes on transmitter cells activate IL6ST receptors on neighboring receiver cells. Functionally, IL6 is a potent inducer of the acute phase response. Rapid production of IL6 contributes to host defense during infection and tissue injury, but excessive IL6 synthesis is involved in disease pathology. In the innate immune response, is synthesized by myeloid cells, such as macrophages and dendritic cells, upon recognition of pathogens through toll-like receptors (TLRs) at the site of infection or tissue injury. In the adaptive immune response, is required for the differentiation of B cells into immunoglobulin-secreting cells. Plays a major role in the differentiation of CD4(+) T cell subsets. Essential factor for the development of T follicular helper (Tfh) cells that are required for the induction of germinal-center formation. Required to drive naive CD4(+) T cells to the Th17 lineage. Also required for proliferation of myeloma cells and the survival of plasmablast cells. In terms of biological role, acts as an essential factor in bone homeostasis and on vessels directly or indirectly by induction of VEGF, resulting in increased angiogenesis activity and vascular permeability. Induces, through 'trans-signaling' and synergistically with IL1B and TNF, the production of VEGF. Involved in metabolic controls, is discharged into the bloodstream after muscle contraction increasing lipolysis and improving insulin resistance. 'Trans-signaling' in central nervous system also regulates energy and glucose homeostasis. Mediates, through GLP-1, crosstalk between insulin-sensitive tissues, intestinal L cells and pancreatic islets to adapt to changes in insulin demand. Also acts as a myokine. Plays a protective role during liver injury, being required for maintenance of tissue regeneration. Also has a pivotal role in iron metabolism by regulating HAMP/hepcidin expression upon inflammation or bacterial infection. Through activation of IL6ST-YAP-NOTCH pathway, induces inflammation-induced epithelial regeneration. The polypeptide is Interleukin-6 (IL6) (Cercocebus atys (Sooty mangabey)).